The primary structure comprises 228 residues: Histidine/lysine/arginine/ornithine transport system permease protein HisQ (228 aa).

The Periplasmic segment spans residues 1 to 12; that stretch reads MLYGFSGVILQG. Residues 13–33 traverse the membrane as a helical segment; that stretch reads AIVTLELALSSVVLAVLIGLV. The ABC transmembrane type-1 domain occupies 13-212; it reads AIVTLELALS…VFTTVSNGVL (200 aa). The Cytoplasmic segment spans residues 34-58; it reads GAGAKLSQNRVTGLIFEGYTTLIRG. A helical membrane pass occupies residues 59-79; the sequence is VPDLVLMLLIFYGLQIALNVV. At 80 to 87 the chain is on the periplasmic side; the sequence is TDSLGIDQ. Residues 88–108 form a helical membrane-spanning segment; the sequence is IDIDPMVAGIITLGFIYGAYF. The Cytoplasmic segment spans residues 109–152; it reads TETFRGAFMAVPKGHIEAATAFGFTHGQTFRRIMFPAMMRYALP. Residues 153–173 form a helical membrane-spanning segment; that stretch reads GIGNNWQVILKATALVSLLGL. Over 174-194 the chain is Periplasmic; sequence EDVVKATQLAGKSTWEPFYFA. Residues 195-215 form a helical membrane-spanning segment; sequence VVCGLIYLVFTTVSNGVLLLL. The Cytoplasmic segment spans residues 216 to 228; it reads ERRYSVGVKRADL.

This sequence belongs to the binding-protein-dependent transport system permease family. HisMQ subfamily. The HisPMQJ complex is composed of two ATP-binding proteins (HisP), two transmembrane proteins (HisM and HisQ) and a solute-binding protein (HisJ). The HisPMQ-ArgT complex is composed of two ATP-binding proteins (HisP), two transmembrane proteins (HisM and HisQ) and a solute-binding protein (ArgT).

It localises to the cell inner membrane. Functionally, part of the ABC transporter complex HisPMQJ involved in histidine transport. Is also part of the ABC transporter complex HisPMQ-ArgT involved in lysine/arginine/ornithine transport. Probably responsible for the translocation of the substrate across the membrane. The chain is Histidine/lysine/arginine/ornithine transport system permease protein HisQ (hisQ) from Salmonella typhi.